Reading from the N-terminus, the 205-residue chain is dTTP/UTP pyrophosphatase (205 aa).

Asp-81 functions as the Proton acceptor in the catalytic mechanism.

This sequence belongs to the Maf family. YhdE subfamily. A divalent metal cation serves as cofactor.

The protein localises to the cytoplasm. It carries out the reaction dTTP + H2O = dTMP + diphosphate + H(+). It catalyses the reaction UTP + H2O = UMP + diphosphate + H(+). Functionally, nucleoside triphosphate pyrophosphatase that hydrolyzes dTTP and UTP. May have a dual role in cell division arrest and in preventing the incorporation of modified nucleotides into cellular nucleic acids. The chain is dTTP/UTP pyrophosphatase from Agathobacter rectalis (strain ATCC 33656 / DSM 3377 / JCM 17463 / KCTC 5835 / VPI 0990) (Eubacterium rectale).